The primary structure comprises 391 residues: Homocysteine-responsive endoplasmic reticulum-resident ubiquitin-like domain member 1 protein (391 aa).

At methionine 1 the chain carries N-acetylmethionine. At 1–263 the chain is on the cytoplasmic side; the sequence is MEPEPQPEPV…VEEDDEINRD (263 aa). In terms of domain architecture, Ubiquitin-like spans 10–72; it reads VTLLVKSPNQ…LLDHQCLQDL (63 aa). A disordered region spans residues 90-126; the sequence is NPSKMPETSTKGAESTEQPDNSNQTQHPGDSSSDGLR. The segment covering 95–124 has biased composition (polar residues); that stretch reads PETSTKGAESTEQPDNSNQTQHPGDSSSDG. Positions 115 to 200 are interaction with UBQLN1; the sequence is QHPGDSSSDG…ASGTFVPTPS (86 aa). Serine 135 carries the post-translational modification Phosphoserine. A helical transmembrane segment spans residues 264-284; it reads WLDWTYSAATFSVFLSILYFY. At 285-289 the chain is on the lumenal side; it reads SSLSR. A helical membrane pass occupies residues 290 to 310; the sequence is FLMVMGATVVMYLHHVGWFPF. The Cytoplasmic portion of the chain corresponds to 311 to 391; the sequence is RQRPVQNFPD…LPEGPPALAN (81 aa). The disordered stretch occupies residues 317-361; sequence NFPDDGGPRDAANQDPNNNLQGGMDPEMEDPNRLPPDREVLDPEH. Residues 346–361 show a composition bias toward basic and acidic residues; it reads DPNRLPPDREVLDPEH.

As to quaternary structure, interacts with PSEN1 and PSEN2. Interacts with UBXN6. Interacts with UBQLN1, UBQLN2 and UBQLN4. Component of the HRD1 complex, which comprises at least SYNV1/HRD1, FAM8A1, HERPUD1/HERP, OS9, SEL1L and UBE2J1. FAM8A1 binding to SYNV1 may promote recruitment of HERPUD1 to the HRD1 complex.

It localises to the endoplasmic reticulum membrane. Its function is as follows. Component of the endoplasmic reticulum quality control (ERQC) system also called ER-associated degradation (ERAD) involved in ubiquitin-dependent degradation of misfolded endoplasmic reticulum proteins. Binds to ubiquilins and this interaction is required for efficient degradation of CD3D via the ERAD pathway. In Mus musculus (Mouse), this protein is Homocysteine-responsive endoplasmic reticulum-resident ubiquitin-like domain member 1 protein (Herpud1).